The chain runs to 277 residues: Purine nucleoside phosphorylase 2 (277 aa).

Residues H65, 85–87 (RGH), and A117 contribute to the phosphate site. Residue E197 participates in a purine D-ribonucleoside binding. S216 serves as a coordination point for phosphate. N239 contacts a purine D-ribonucleoside.

Belongs to the PNP/MTAP phosphorylase family. In terms of assembly, hexamer. Dimer of trimers.

The catalysed reaction is a purine D-ribonucleoside + phosphate = a purine nucleobase + alpha-D-ribose 1-phosphate. It functions in the pathway purine metabolism; xanthosine degradation. It participates in purine metabolism; purine nucleoside salvage. With respect to regulation, rapidly inactivated by p-chloromercuriphenylsulfonic acid (p-CMB). Dithiothreitol incubation restores the activity. Functionally, the purine nucleoside phosphorylases catalyze the phosphorolytic breakdown of the N-glycosidic bond in the beta-(deoxy)ribonucleoside molecules, with the formation of the corresponding free purine bases and pentose-1-phosphate. This protein can degrade all purine nucleosides including xanthosine, inosine and guanosine, but cannot cleave adenosine, deoxyadenosine or hypoxanthine arabinoside. Has a preference for the neutral over the monoanionic form of xanthosine. The protein is Purine nucleoside phosphorylase 2 (xapA) of Escherichia coli (strain K12).